The primary structure comprises 298 residues: Glyoxalase domain-containing protein 4 (298 aa).

Residues 5–130 enclose the VOC 1 domain; it reads RALHFVFKVK…GGYKFYLQDR (126 aa). At lysine 109 the chain carries N6-succinyllysine. Position 131 is a phosphoserine (serine 131). The region spanning 137–258 is the VOC 2 domain; that stretch reads PVLKVTLAVS…DGHEICFVGD (122 aa). Lysine 273 carries the post-translational modification N6-succinyllysine.

The protein belongs to the glyoxalase I family. In terms of assembly, interacts with NUDT9.

It is found in the mitochondrion. This is Glyoxalase domain-containing protein 4 (Glod4) from Mus musculus (Mouse).